Reading from the N-terminus, the 226-residue chain is Beta-phosphoglucomutase (226 aa).

Catalysis depends on D7, which acts as the Nucleophile. Mg(2+) contacts are provided by D7 and D9. A 4-aspartylphosphate modification is found at D7. D9 (proton donor/acceptor) is an active-site residue. The beta-D-glucose 6-phosphate site is built by D9, G44, I45, R47, S116, R117, and N118. D170 is a binding site for Mg(2+).

Belongs to the HAD-like hydrolase superfamily. CbbY/CbbZ/Gph/YieH family. In terms of assembly, homodimer. Requires Mg(2+) as cofactor. Autophosphorylated.

It is found in the cytoplasm. It carries out the reaction beta-D-glucose 1-phosphate = beta-D-glucose 6-phosphate. In terms of biological role, catalyzes the interconversion of D-glucose 1-phosphate (G1P) and D-glucose 6-phosphate (G6P), forming beta-D-glucose 1,6-(bis)phosphate (beta-G16P) as an intermediate. In Bacillus subtilis (strain 168), this protein is Beta-phosphoglucomutase (yvdM).